A 206-amino-acid chain; its full sequence is Thiamine-phosphate synthase (206 aa).

4-amino-2-methyl-5-(diphosphooxymethyl)pyrimidine is bound by residues 39–43 (QYREK) and N74. Mg(2+) is bound by residues D75 and D94. Residue S112 participates in 4-amino-2-methyl-5-(diphosphooxymethyl)pyrimidine binding. 138 to 140 (TNT) contacts 2-[(2R,5Z)-2-carboxy-4-methylthiazol-5(2H)-ylidene]ethyl phosphate. Position 141 (K141) interacts with 4-amino-2-methyl-5-(diphosphooxymethyl)pyrimidine. 2-[(2R,5Z)-2-carboxy-4-methylthiazol-5(2H)-ylidene]ethyl phosphate is bound by residues G170 and 190–191 (IS).

The protein belongs to the thiamine-phosphate synthase family. Requires Mg(2+) as cofactor.

The catalysed reaction is 2-[(2R,5Z)-2-carboxy-4-methylthiazol-5(2H)-ylidene]ethyl phosphate + 4-amino-2-methyl-5-(diphosphooxymethyl)pyrimidine + 2 H(+) = thiamine phosphate + CO2 + diphosphate. It catalyses the reaction 2-(2-carboxy-4-methylthiazol-5-yl)ethyl phosphate + 4-amino-2-methyl-5-(diphosphooxymethyl)pyrimidine + 2 H(+) = thiamine phosphate + CO2 + diphosphate. The enzyme catalyses 4-methyl-5-(2-phosphooxyethyl)-thiazole + 4-amino-2-methyl-5-(diphosphooxymethyl)pyrimidine + H(+) = thiamine phosphate + diphosphate. The protein operates within cofactor biosynthesis; thiamine diphosphate biosynthesis; thiamine phosphate from 4-amino-2-methyl-5-diphosphomethylpyrimidine and 4-methyl-5-(2-phosphoethyl)-thiazole: step 1/1. Functionally, condenses 4-methyl-5-(beta-hydroxyethyl)thiazole monophosphate (THZ-P) and 2-methyl-4-amino-5-hydroxymethyl pyrimidine pyrophosphate (HMP-PP) to form thiamine monophosphate (TMP). The polypeptide is Thiamine-phosphate synthase (Oceanobacillus iheyensis (strain DSM 14371 / CIP 107618 / JCM 11309 / KCTC 3954 / HTE831)).